We begin with the raw amino-acid sequence, 158 residues long: Extracellular giant hemoglobin major globin subunit A2 (158 aa).

Residues 1–16 (MKSLIVFACLVAYAAA) form the signal peptide. One can recognise a Globin domain in the interval 17-158 (DCTSLNRLLV…MNQIVSGISG (142 aa)). The cysteines at positions 18 and 148 are disulfide-linked. Cysteine 89 is a binding site for hydrogen sulfide. Residue histidine 110 coordinates heme b.

The protein belongs to the globin family. As to quaternary structure, the 400 kDa hemoglobin consists of a spherical 24-mer arranged as a double layer of dome-shaped dodecamers. Each dodecamer is composed of the 3-fold trimer of the tetramer A1-A2-B1-B2 having one intra-tetramer (A1-B2) disulfide bond and one inter-tetramer (B1-B2) disulfide bond per tetramer.

The protein localises to the secreted. Its function is as follows. The extracellular giant hemoglobin is able to bind and transport oxygen and hydrosulfide simultaneously and reversibly at two different sites. This chain is Extracellular giant hemoglobin major globin subunit A2 (ghbA2), found in Oligobrachia mashikoi (Beard worm).